We begin with the raw amino-acid sequence, 1134 residues long: Protocadherin 18 (1134 aa).

A signal peptide spans 1–27 (MHQMNTKMHFRFALALLMAFFSHDVLA). Cadherin domains lie at 28–137 (KNLK…SPQF), 138–246 (SRPV…SPAF), 247–354 (EQPS…KPEI), 361–465 (PGKE…PPRF), 466–576 (QRSR…VPVV), and 582–688 (HNNT…STAM). At 28–699 (KNLKYRIYEE…SVSRASLDVS (672 aa)) the chain is on the extracellular side. Asparagine 103 is a glycosylation site (N-linked (GlcNAc...) asparagine). An N-linked (GlcNAc...) asparagine glycan is attached at asparagine 269. A glycan (N-linked (GlcNAc...) asparagine) is linked at asparagine 559. A helical membrane pass occupies residues 700–720 (MIIIISLGAICAVLLVIMVLF). Topologically, residues 721–1134 (ATRCNREKKD…NKLLQDVRQS (414 aa)) are cytoplasmic. Disordered regions lie at residues 769–800 (LPIRSHHRSSPSSSPTLERGQMGSRQSHNSHQ), 868–888 (SLKDSGRGDSEAGDSDYDLGR), 941–1004 (DYRS…SSLL), and 1022–1083 (FSEC…PSSK). Over residues 791-800 (GSRQSHNSHQ) the composition is skewed to polar residues. Basic and acidic residues predominate over residues 868–877 (SLKDSGRGDS). The segment at 892–1134 (IDRLLGEGFS…NKLLQDVRQS (243 aa)) is interaction with DAB1. Positions 1027-1038 (EGDRSNSLERRK) are enriched in basic and acidic residues. The span at 1059 to 1082 (THFQNPTSSSGTPLGTHSSVQPSS) shows a compositional bias: polar residues.

As to quaternary structure, interacts with DAB1. Predominantly expressed in kidney and lung.

The protein resides in the cell membrane. Its function is as follows. Potential calcium-dependent cell-adhesion protein. The polypeptide is Protocadherin 18 (Pcdh18) (Mus musculus (Mouse)).